A 498-amino-acid polypeptide reads, in one-letter code: Phosphatidylserine synthase (498 aa).

The interval 1-65 (MKKRTNSRGT…GSVSSAGARR (65 aa)) is disordered. Residues 1 to 92 (MKKRTNSRGT…VDDISLDFFY (92 aa)) lie on the Cytoplasmic side of the membrane. Residues 7–25 (SRGTPTSSGDALLDTSFSS) show a composition bias toward polar residues. A helical membrane pass occupies residues 93 to 113 (KPHTITLLAVSVLAVMYFAFV). Over 114–122 (RNEANVDEN) the chain is Lumenal. The helical transmembrane segment at 123-143 (LWAGLLCIVFFFLIVSVIAFP) threads the bilayer. The Cytoplasmic segment spans residues 144 to 153 (NGPFTRPHPA). The helical transmembrane segment at 154 to 174 (VWRILFGCSVLYLLTLQFLMF) threads the bilayer. Topologically, residues 175-239 (QNYPTIRSIF…AFKAILIRHM (65 aa)) are lumenal. N-linked (GlcNAc...) asparagine glycosylation is present at N205. The chain crosses the membrane as a helical span at residues 240–260 (GILWAISVMWEITEITFAHLL). Topologically, residues 261-266 (PNFIEC) are cytoplasmic. Residues 267–287 (WWDALILDVIICNGLGIWMGL) form a helical membrane-spanning segment. The Lumenal segment spans residues 288-339 (KICQILEMREYKWASIKDISTTTGKIKRAMLQFTPESWSAIRWLDPKSTAMR). The helical transmembrane segment at 340-360 (FAAVIQLVIFWQVTELNTFFL) threads the bilayer. The Cytoplasmic segment spans residues 361-367 (KHIFEMP). Residues 368 to 388 (PDHFIVIGRLIFIGLFVAPSV) form a helical membrane-spanning segment. At 389-402 (RQYYVYVTDTRCKR) the chain is on the lumenal side. A helical membrane pass occupies residues 403–423 (VGTQCWVYGAIMVSEAILCIK). Topologically, residues 424–436 (NGKELFERTQAIN) are cytoplasmic. The chain crosses the membrane as a helical span at residues 437 to 457 (IVLWLTVQVIISVAFVYLAVY). Residues 458–498 (WQQRQLKKVSSTPAKTKETIPASSSSPSKGKLSPQKEKKLK) are Lumenal-facing. The disordered stretch occupies residues 465 to 498 (KVSSTPAKTKETIPASSSSPSKGKLSPQKEKKLK). Residues 478 to 490 (PASSSSPSKGKLS) are compositionally biased toward low complexity.

Belongs to the phosphatidyl serine synthase family.

It is found in the endoplasmic reticulum membrane. The enzyme catalyses a 1,2-diacyl-sn-glycero-3-phosphoethanolamine + L-serine = a 1,2-diacyl-sn-glycero-3-phospho-L-serine + ethanolamine. The protein operates within phospholipid metabolism; phosphatidylserine biosynthesis. Catalyzes a base-exchange reaction in which the polar head group of phosphatidylethanolamine (PE) is replaced by L-serine. The sequence is that of Phosphatidylserine synthase from Drosophila melanogaster (Fruit fly).